A 156-amino-acid polypeptide reads, in one-letter code: Single-stranded DNA-binding protein 1 (156 aa).

The 104-residue stretch at 1–104 (MLNRTILVGR…VVADSIQFLE (104 aa)) folds into the SSB domain. The interval 122–146 (QTRGQSQYSNNKPVKDNPFANANCP) is disordered.

In terms of assembly, homotetramer.

The sequence is that of Single-stranded DNA-binding protein 1 (ssb1) from Staphylococcus aureus (strain MSSA476).